The following is an 88-amino-acid chain: Small ribosomal subunit protein uS17 (88 aa).

It belongs to the universal ribosomal protein uS17 family. In terms of assembly, part of the 30S ribosomal subunit.

In terms of biological role, one of the primary rRNA binding proteins, it binds specifically to the 5'-end of 16S ribosomal RNA. In Prochlorococcus marinus subsp. pastoris (strain CCMP1986 / NIES-2087 / MED4), this protein is Small ribosomal subunit protein uS17.